The following is a 467-amino-acid chain: Glutamate--tRNA ligase (467 aa).

Residues P9 to G19 carry the 'HIGH' region motif. The 'KMSKS' region signature appears at K250–R254. K253 lines the ATP pocket.

Belongs to the class-I aminoacyl-tRNA synthetase family. Glutamate--tRNA ligase type 1 subfamily. In terms of assembly, monomer.

Its subcellular location is the cytoplasm. The catalysed reaction is tRNA(Glu) + L-glutamate + ATP = L-glutamyl-tRNA(Glu) + AMP + diphosphate. Its function is as follows. Catalyzes the attachment of glutamate to tRNA(Glu) in a two-step reaction: glutamate is first activated by ATP to form Glu-AMP and then transferred to the acceptor end of tRNA(Glu). The protein is Glutamate--tRNA ligase of Mesomycoplasma hyopneumoniae (strain J / ATCC 25934 / NCTC 10110) (Mycoplasma hyopneumoniae).